Consider the following 352-residue polypeptide: MTETVTVSELAEGLGAELVGKPTRVIRRVATLCDAGPDAIGFCSNANYLEDLRATGAGAVIVRAEHVAECPTTALVVDDPYYAYAAVATRLHPAERPPAGVHPTAVVAEGVTLGEAVSVGPHAVVEAGARLGARTIVGPGCHVGTGVEIGEDSHLMGRVTVADRCVVGCRVILHPGVVVGADGFGFAKGPGKAGWRKVPQLGRVILGDDVDLGANTTVDRGAIDDTVLEEGVKLDNQVHIGHNVRVGARTIIAGNTVVAGSTTIGCDCMIGGSSAITGHISIADGVILMGMTGVTGSIKQPGAYASPLPAKPVREWRRNSVRFTQLDDLFRRVKRLEAAQSTGEGDGGDDGD.

His242 acts as the Proton acceptor in catalysis.

It belongs to the transferase hexapeptide repeat family. LpxD subfamily. Homotrimer.

It carries out the reaction a UDP-3-O-[(3R)-3-hydroxyacyl]-alpha-D-glucosamine + a (3R)-hydroxyacyl-[ACP] = a UDP-2-N,3-O-bis[(3R)-3-hydroxyacyl]-alpha-D-glucosamine + holo-[ACP] + H(+). The protein operates within bacterial outer membrane biogenesis; LPS lipid A biosynthesis. Functionally, catalyzes the N-acylation of UDP-3-O-acylglucosamine using 3-hydroxyacyl-ACP as the acyl donor. Is involved in the biosynthesis of lipid A, a phosphorylated glycolipid that anchors the lipopolysaccharide to the outer membrane of the cell. The polypeptide is UDP-3-O-acylglucosamine N-acyltransferase (Alkalilimnicola ehrlichii (strain ATCC BAA-1101 / DSM 17681 / MLHE-1)).